A 274-amino-acid chain; its full sequence is Cytochrome c oxidase subunit 3 (274 aa).

Residues 1–15 (MTHQTHAYHMVNPSP) are Mitochondrial matrix-facing. Residues 16–34 (WPLTGALSALLMTSGLAMW) form a helical membrane-spanning segment. Residues 35 to 40 (FHFNSS) are Mitochondrial intermembrane-facing. Residues 41-66 (MLLSLGMLTNLLTMYQWWRDIVREGT) traverse the membrane as a helical segment. Residues 67 to 72 (FQGHHT) lie on the Mitochondrial matrix side of the membrane. A helical membrane pass occupies residues 73-105 (SIVQKGLRYGMVLFIISEIFFFAGFFWAFYHSS). The Mitochondrial intermembrane portion of the chain corresponds to 106–128 (LAPTPELGGCWPPTGIHPLNPLE). The chain crosses the membrane as a helical span at residues 129–152 (VPLLNTAVLLASGVSITWAHHSLM). The Mitochondrial matrix segment spans residues 153–155 (EGN). The chain crosses the membrane as a helical span at residues 156–183 (RVQMLQALLITITLGLYFTLLQASEYFE). Residues 184–190 (TSFTISD) lie on the Mitochondrial intermembrane side of the membrane. A helical membrane pass occupies residues 191 to 223 (GVYGSTFFMATGFHGLHVIIGSTFLTVCFFRQL). Residues 224-232 (SFHFTSNHH) are Mitochondrial matrix-facing. The chain crosses the membrane as a helical span at residues 233–256 (FGFEAAAWYWHFVDVVWLFLYVSI). The Mitochondrial intermembrane portion of the chain corresponds to 257 to 274 (YWWGSYSFSIDPMQLTSN).

This sequence belongs to the cytochrome c oxidase subunit 3 family. As to quaternary structure, component of the cytochrome c oxidase (complex IV, CIV), a multisubunit enzyme composed of 14 subunits. The complex is composed of a catalytic core of 3 subunits MT-CO1, MT-CO2 and MT-CO3, encoded in the mitochondrial DNA, and 11 supernumerary subunits COX4I, COX5A, COX5B, COX6A, COX6B, COX6C, COX7A, COX7B, COX7C, COX8 and NDUFA4, which are encoded in the nuclear genome. The complex exists as a monomer or a dimer and forms supercomplexes (SCs) in the inner mitochondrial membrane with NADH-ubiquinone oxidoreductase (complex I, CI) and ubiquinol-cytochrome c oxidoreductase (cytochrome b-c1 complex, complex III, CIII), resulting in different assemblies (supercomplex SCI(1)III(2)IV(1) and megacomplex MCI(2)III(2)IV(2)).

Its subcellular location is the mitochondrion inner membrane. The enzyme catalyses 4 Fe(II)-[cytochrome c] + O2 + 8 H(+)(in) = 4 Fe(III)-[cytochrome c] + 2 H2O + 4 H(+)(out). Functionally, component of the cytochrome c oxidase, the last enzyme in the mitochondrial electron transport chain which drives oxidative phosphorylation. The respiratory chain contains 3 multisubunit complexes succinate dehydrogenase (complex II, CII), ubiquinol-cytochrome c oxidoreductase (cytochrome b-c1 complex, complex III, CIII) and cytochrome c oxidase (complex IV, CIV), that cooperate to transfer electrons derived from NADH and succinate to molecular oxygen, creating an electrochemical gradient over the inner membrane that drives transmembrane transport and the ATP synthase. Cytochrome c oxidase is the component of the respiratory chain that catalyzes the reduction of oxygen to water. Electrons originating from reduced cytochrome c in the intermembrane space (IMS) are transferred via the dinuclear copper A center (CU(A)) of subunit 2 and heme A of subunit 1 to the active site in subunit 1, a binuclear center (BNC) formed by heme A3 and copper B (CU(B)). The BNC reduces molecular oxygen to 2 water molecules using 4 electrons from cytochrome c in the IMS and 4 protons from the mitochondrial matrix. The protein is Cytochrome c oxidase subunit 3 (MT-CO3) of Lemur catta (Ring-tailed lemur).